The following is a 1103-amino-acid chain: Kinesin-like protein KIF1C (1103 aa).

A Kinesin motor domain is found at 5-348 (SVKVAVRVRP…LRYADRTKQI (344 aa)). 97–104 (GQTGAGKS) is an ATP binding site. Position 295 is a phosphoserine (Ser-295). Coiled coils occupy residues 359–388 (NARL…SALE) and 438–479 (EEAM…LAEM). The segment at 400–438 (ALPAVSSPPAPVSPSSPTTHNGELEPSFSPNTESQIGPE) is disordered. Ser-494 carries the phosphoserine modification. An FHA domain is found at 523–590 (TRVGQVDMDI…LKSGNRIVMG (68 aa)). A coiled-coil region spans residues 633 to 674 (EQQGIDIKLEMEKRLQDLENQYRKEKEEADLLLEQQRLYADS). A phosphoserine mark is found at Ser-674 and Ser-676. Disordered stretches follow at residues 808–828 (GEEE…ARGA), 874–924 (LAQD…WERV), and 950–1103 (QGLQ…GAAV). Over residues 813–822 (GGAGSGGGSE) the composition is skewed to gly residues. Residues 828–872 (AEVEDLRAHIDKLTGILQEVKLQNSSKDRELQALRDRMLRMERVI) are a coiled coil. The span at 893–910 (PEGSEAAEEAAPSDRMPS) shows a compositional bias: low complexity. At Ser-915 the chain carries Phosphoserine. A compositionally biased stretch (gly residues) spans 953–962 (QGSGGRGGGL). The span at 1021–1031 (PSPRRSHHPRR) shows a compositional bias: basic residues. Position 1033 is a phosphoserine (Ser-1033). Arg-1041 is modified (omega-N-methylarginine). The span at 1062 to 1083 (PQPPQPYPAQRPPGPRYPPYTT) shows a compositional bias: pro residues. Position 1083 is a phosphothreonine (Thr-1083). Ser-1092 carries the post-translational modification Phosphoserine. The span at 1092 to 1103 (SAPDLKESGAAV) shows a compositional bias: basic and acidic residues.

The protein belongs to the TRAFAC class myosin-kinesin ATPase superfamily. Kinesin family. Unc-104 subfamily. In terms of assembly, monomer. Interacts with BICD2. Phosphorylated on tyrosine residues. As to expression, expressed in all tissues examined, with most abundant expression in heart and skeletal muscle.

Its subcellular location is the cytoplasm. The protein localises to the cytoskeleton. Motor required for the retrograde transport of Golgi vesicles to the endoplasmic reticulum. Has a microtubule plus end-directed motility. This Homo sapiens (Human) protein is Kinesin-like protein KIF1C (KIF1C).